The following is a 608-amino-acid chain: Glutamine--fructose-6-phosphate aminotransferase [isomerizing] (608 aa).

The active-site Nucleophile; for GATase activity is cysteine 2. The Glutamine amidotransferase type-2 domain maps to 2–217; sequence CGIVGILGRG…DGDWAVLTRA (216 aa). 2 SIS domains span residues 284-423 and 456-598; these read LPFD…ERGK and LARY…VDQP. Lysine 603 (for Fru-6P isomerization activity) is an active-site residue.

The protein localises to the cytoplasm. It catalyses the reaction D-fructose 6-phosphate + L-glutamine = D-glucosamine 6-phosphate + L-glutamate. Involved in the production of the root hair deformation (HAD) factor specifically on soybean. This Bradyrhizobium diazoefficiens (strain JCM 10833 / BCRC 13528 / IAM 13628 / NBRC 14792 / USDA 110) protein is Glutamine--fructose-6-phosphate aminotransferase [isomerizing] (nodM).